The following is a 236-amino-acid chain: uncharacterized protein (236 aa).

Residues 15–34 traverse the membrane as a helical segment; the sequence is GGMAHIISEAVIAGSIGLYF. Positions 36–71 form a coiled coil; that stretch reads KKISALEQTVQELQSQLEVQNNQLQWLIQQQTRRLA. Disordered stretches follow at residues 83–113 and 185–236; these read SPLP…FQFK and ATTQ…IDCE. 2 stretches are compositionally biased toward polar residues: residues 93–102 and 185–195; these read QQSTTTNAAG and ATTQVSTFSKP. Positions 225–236 are enriched in basic and acidic residues; the sequence is ALDKILNDIDCE.

It localises to the membrane. This is an uncharacterized protein from Aedes vexans (Inland floodwater mosquito).